Reading from the N-terminus, the 222-residue chain is Probable transaldolase (222 aa).

Lysine 91 functions as the Schiff-base intermediate with substrate in the catalytic mechanism.

It belongs to the transaldolase family. Type 3B subfamily.

Its subcellular location is the cytoplasm. It catalyses the reaction D-sedoheptulose 7-phosphate + D-glyceraldehyde 3-phosphate = D-erythrose 4-phosphate + beta-D-fructose 6-phosphate. Its pathway is carbohydrate degradation; pentose phosphate pathway; D-glyceraldehyde 3-phosphate and beta-D-fructose 6-phosphate from D-ribose 5-phosphate and D-xylulose 5-phosphate (non-oxidative stage): step 2/3. In terms of biological role, transaldolase is important for the balance of metabolites in the pentose-phosphate pathway. This Chlorobium luteolum (strain DSM 273 / BCRC 81028 / 2530) (Pelodictyon luteolum) protein is Probable transaldolase.